The following is a 273-amino-acid chain: Hemin import ATP-binding protein HmuV (273 aa).

In terms of domain architecture, ABC transporter spans 2–256 (LTAHHLDVAR…AHIAQCYGFA (255 aa)). 34-41 (GRNGAGKS) provides a ligand contact to ATP.

This sequence belongs to the ABC transporter superfamily. Heme (hemin) importer (TC 3.A.1.14.5) family. As to quaternary structure, the complex is composed of two ATP-binding proteins (HmuV), two transmembrane proteins (HmuU) and a solute-binding protein (HmuT).

Its subcellular location is the cell inner membrane. Functionally, part of the ABC transporter complex HmuTUV involved in hemin import. Responsible for energy coupling to the transport system. The chain is Hemin import ATP-binding protein HmuV from Burkholderia lata (strain ATCC 17760 / DSM 23089 / LMG 22485 / NCIMB 9086 / R18194 / 383).